We begin with the raw amino-acid sequence, 377 residues long: Succinyl-diaminopimelate desuccinylase (377 aa).

Zn(2+) is bound at residue His68. Residue Asp70 is part of the active site. Asp101 provides a ligand contact to Zn(2+). Glu135 functions as the Proton acceptor in the catalytic mechanism. Glu136, Glu164, and His350 together coordinate Zn(2+).

The protein belongs to the peptidase M20A family. DapE subfamily. In terms of assembly, homodimer. It depends on Zn(2+) as a cofactor. Co(2+) serves as cofactor.

It carries out the reaction N-succinyl-(2S,6S)-2,6-diaminopimelate + H2O = (2S,6S)-2,6-diaminopimelate + succinate. Its pathway is amino-acid biosynthesis; L-lysine biosynthesis via DAP pathway; LL-2,6-diaminopimelate from (S)-tetrahydrodipicolinate (succinylase route): step 3/3. Functionally, catalyzes the hydrolysis of N-succinyl-L,L-diaminopimelic acid (SDAP), forming succinate and LL-2,6-diaminopimelate (DAP), an intermediate involved in the bacterial biosynthesis of lysine and meso-diaminopimelic acid, an essential component of bacterial cell walls. The polypeptide is Succinyl-diaminopimelate desuccinylase (Aliivibrio fischeri (strain MJ11) (Vibrio fischeri)).